A 315-amino-acid polypeptide reads, in one-letter code: PIH1 domain-containing protein 2 (315 aa).

This sequence belongs to the PIH1 family.

This chain is PIH1 domain-containing protein 2 (PIH1D2), found in Bos taurus (Bovine).